The chain runs to 215 residues: Cytochrome b6 (215 aa).

A helical membrane pass occupies residues 32–52; sequence IFYCLGGITLTCFLVQVATGF. Residue C35 participates in heme c binding. H86 and H100 together coordinate heme b. Helical transmembrane passes span 90–110, 116–136, and 186–206; these read ASMM…TGGF, LTWV…VTGY, and LHTF…FPMI. Heme b is bound by residues H187 and H202.

It belongs to the cytochrome b family. PetB subfamily. The 4 large subunits of the cytochrome b6-f complex are cytochrome b6, subunit IV (17 kDa polypeptide, PetD), cytochrome f and the Rieske protein, while the 4 small subunits are PetG, PetL, PetM and PetN. The complex functions as a dimer. Heme b serves as cofactor. Requires heme c as cofactor.

It is found in the plastid. It localises to the chloroplast thylakoid membrane. Its function is as follows. Component of the cytochrome b6-f complex, which mediates electron transfer between photosystem II (PSII) and photosystem I (PSI), cyclic electron flow around PSI, and state transitions. This is Cytochrome b6 from Jasminum nudiflorum (Winter jasmine).